The sequence spans 503 residues: 5'-3' exonuclease PLD4 (503 aa).

Over 1–36 (MDKKKEHPEMRIPLQTAVEVSDWPCSTSHDPHSGLG) the chain is Cytoplasmic. A signal-anchor for type II membrane protein membrane pass occupies residues 37–57 (MVLGMLAVLGLSSVTLILFLW). Residues 58 to 503 (QGATSFTSHR…RQVPSQDCVW (446 aa)) are Lumenal-facing. N-linked (GlcNAc...) asparagine glycosylation is found at Asn-89, Asn-148, and Asn-169. Cys-92 and Cys-248 form a disulfide bridge. In terms of domain architecture, PLD phosphodiesterase 1 spans 207-234 (TGGVLHSKFWVVDGRHIYVGSANMDWRS). Active-site residues include His-212, Lys-214, and Asp-219. His-212 (proton donor) is an active-site residue. N-linked (GlcNAc...) asparagine glycosylation is found at Asn-247, Asn-279, Asn-415, and Asn-425. A disulfide bridge links Cys-377 with Cys-501. The region spanning 421 to 447 (FSRVNHSKFMVTDKTAYVGTSNWSEDY) is the PLD phosphodiesterase 2 domain. Catalysis depends on residues His-426, Lys-428, and Asp-433. The active-site Nucleophile is His-426. Asn-442 carries N-linked (GlcNAc...) asparagine glycosylation.

Belongs to the phospholipase D family. In terms of processing, highly N-glycosylated. In terms of tissue distribution, enriched in the white matter of early postnatal brains, as well as in splenic marginal zone cells. Highly expressed in dendritic cells (DCs) and other myeloid cells, with lower expression in B cell.

It is found in the endoplasmic reticulum membrane. The protein resides in the golgi apparatus. Its subcellular location is the trans-Golgi network membrane. The protein localises to the nucleus. It localises to the early endosome. It is found in the cytoplasmic vesicle. The protein resides in the phagosome. Its subcellular location is the lysosome. It catalyses the reaction Exonucleolytic cleavage in the 5'- to 3'-direction to yield nucleoside 3'-phosphates.. It carries out the reaction a 5'-end 5'-dephospho-ribonucleotidyl-ribonucleotide-RNA + H2O = a ribonucleoside 3'-phosphate + a 5'-end dephospho-ribonucleoside-RNA + H(+). The catalysed reaction is a ribonucleoside 3'-phosphate-2'-3'-cyclophospho-GMP + H2O = a ribonucleoside 3'-phosphate + 2',3'-cyclophospho-GMP + H(+). The enzyme catalyses a 5'-end 5'-dephospho-2'-deoxyribonucleotidyl-2'-deoxyribonucleotide in single-stranded DNA + H2O = a 5'-end dephospho-2'-deoxyribonucleoside in single-stranded DNA + a 2'-deoxyribonucleoside 3'-phosphate + H(+). It catalyses the reaction a 5'-end 5'-phospho-2'-deoxyribonucleotide in single-stranded DNA + H2O = a 5'-end 5'-dephospho-2'-deoxyribonucleotide in single-stranded DNA + phosphate. It carries out the reaction a 3-lyso-sn-glycero-1-phospho-(3'-acyl-1'-sn-glycerol) + a 1-acyl-sn-glycerol = a 3-acyl-sn-glycero-1-phospho-(3'-acyl-1'-sn-glycerol) + glycerol. The catalysed reaction is 3-lyso-sn-glycero-1-phospho-(3'-(9Z-octadecenoyl)-1'-sn-glycerol) + 1-(9Z-octadecenoyl)-sn-glycerol = 3-(9Z-octadecenoyl)-sn-glycero-1-phospho-(3'-(9Z-octadecenoyl)-1'-sn-glycerol) + glycerol. With respect to regulation, the exonuclease activity toward ssDNA substrate is Ca(2+) and Mg(2+)-independent, but it is inhibited by Fe(2+), Cu(2+) and to a lesser extent Zn(2+) ions. Functionally, 5'-&gt;3' exonuclease that hydrolyzes the phosphodiester bond of single-stranded DNA (ssDNA) and RNA molecules to form nucleoside 3'-monophosphates and 5'-end 5'-hydroxy deoxyribonucleotide/ribonucleotide fragments. Partially redundant with PLD4, can cleave all four nucleotides displaying higher efficiency for ssDNA and RNA fragments initiated with uridine and guanosine residues and lower efficiency for cytidine-initiated substrates. As a result, it does not always degrade polynucleotides to the single nucleotide level, it can stall at specific sites sparing certain fragments from exonucleolytic degradation. Processes self and pathogenic ssDNA and RNA molecules that reach the endolysosomal compartment via phagocytosis or autophagy and may serve as 'danger' signals for recognition by innate immune receptors such as toll-like receptors (TLRs). Degrades mitochondrial CpG-rich ssDNA fragments to prevent TLR9 activation and autoinflammatory response, but it can cleave viral RNA to generate ligands for TLR7 activation and initiate antiviral immune responses. In plasmacytoid dendritic cells, it cooperates with endonuclease RNASET2 to release 2',3'-cyclic guanosine monophosphate (2',3'-cGMP), a potent stimulatory ligand for TLR7. Produces 2',3'-cGMPs and cytidine-rich RNA fragments that occupy TLR7 ligand-binding pockets and trigger a signaling-competent state. Can exert polynucleotide phosphatase activity toward 5'-phosphorylated ssDNA substrates although at a slow rate. Transphosphatidylase that catalyzes the exchange with R to S stereo-inversion of the glycerol moiety between (S,R)-lysophosphatidylglycerol (LPG) and monoacylglycerol (MAG) substrates to yield (S,S)-bis(monoacylglycero)phosphate (BMP). Can synthesize a variety of (S,S)-BMPs representing the main phospholipid constituent of lysosomal intralumenal vesicle (ILV) membranes that bind acid hydrolases for lipid degradation. Regulates the homeostasis and interorganellar communication of the endolysosomal system with an overall impact on cellular removal of dysfunctional organelles via autophagy as well as proper protein and lipid turnover. May play a role in myotube formation in response to ER stress. In Mus musculus (Mouse), this protein is 5'-3' exonuclease PLD4.